An 803-amino-acid chain; its full sequence is Volume-regulated anion channel subunit LRRC8C (803 aa).

Over 1–22 the chain is Cytoplasmic; the sequence is MIPVTEFRQFSEQQPAFRVLKP. Residues 23–43 traverse the membrane as a helical segment; it reads WWDVFTDYLSVAMLMIGVFGC. The Extracellular portion of the chain corresponds to 44–125; it reads TLQVMQDKII…YERALHWYAK (82 aa). 2 disulfides stabilise this stretch: Cys-54–Cys-308 and Cys-115–Cys-293. N-linked (GlcNAc...) asparagine glycans are attached at residues Asn-64 and Asn-70. The helical transmembrane segment at 126–146 threads the bilayer; the sequence is YFPYLVLIHTLVFMLCSNFWF. Residues 147–266 are Cytoplasmic-facing; the sequence is KFPGSSSKIE…ILYAMYVRQT (120 aa). The interval 177-209 is disordered; the sequence is EVSGEDSEEKDNRKNNMSRSNTTQSGPEGSLVN. Residues 191-209 show a composition bias toward polar residues; the sequence is NNMSRSNTTQSGPEGSLVN. Phosphoserine occurs at positions 212 and 215. The chain crosses the membrane as a helical span at residues 267 to 287; sequence VLKVIKFLIIIAYNSALVSKV. Topologically, residues 288–320 are extracellular; sequence QFTVDCNVDIQDMTGYKNFSCNHTMAHLFSKLS. Residues 321 to 341 traverse the membrane as a helical segment; the sequence is FCYLCFVSIYGLTCLYTLYWL. The Cytoplasmic segment spans residues 342–803; it reads FYRSLKEYSF…SDVREQMKTE (462 aa). LRR repeat units follow at residues 397–419, 420–443, 446–465, 468–490, 492–513, 515–536, 543–563, 566–586, 590–611, 613–634, 638–659, 661–682, 684–705, 707–728, 730–751, 753–774, and 776–799; these read ENKL…QKLQ, TNAH…VFEI, LQSL…TIAQ, NLQE…SFLK, NLKV…MYGL, NLEE…VTLE, SLKI…VVDV, HLQK…NNLK, NLTE…VFSL, SLQE…VSFQ, KLTV…IKKL, SLER…LFLC, KIRY…IGVL, SLQY…LYFC, KLKT…IGNL, FLSY…LGDC, and ALKR…VREQ.

This sequence belongs to the LRRC8 family. In terms of assembly, heterohexamer; oligomerizes with other LRRC8 proteins (LRRC8A, LRRC8B, LRRC8D and/or LRRC8E) to form a heterohexamer. Homoheptamer; inactive, likely because it is not targeted to the plasma membrane in the absence of LRRC8A. In vivo, the subunit composition may depend primarily on expression levels, and heterooligomeric channels containing various proportions of the different LRRC8 proteins may coexist.

It localises to the cell membrane. It is found in the endoplasmic reticulum membrane. The enzyme catalyses chloride(in) = chloride(out). It catalyses the reaction iodide(out) = iodide(in). It carries out the reaction taurine(out) = taurine(in). The catalysed reaction is 2',3'-cGAMP(out) = 2',3'-cGAMP(in). Its function is as follows. Non-essential component of the volume-regulated anion channel (VRAC, also named VSOAC channel), an anion channel required to maintain a constant cell volume in response to extracellular or intracellular osmotic changes. The VRAC channel conducts iodide better than chloride and can also conduct organic osmolytes like taurine. Plays a redundant role in the efflux of amino acids, such as aspartate and glutamate, in response to osmotic stress. The VRAC channel also mediates transport of immunoreactive cyclic dinucleotide GMP-AMP (2'-3'-cGAMP), an immune messenger produced in response to DNA virus in the cytosol. Channel activity requires LRRC8A plus at least one other family member (LRRC8B, LRRC8C, LRRC8D or LRRC8E); channel characteristics depend on the precise subunit composition. This is Volume-regulated anion channel subunit LRRC8C from Bos taurus (Bovine).